The primary structure comprises 492 residues: Glycylpeptide N-tetradecanoyltransferase (492 aa).

Residues 1 to 22 are compositionally biased toward basic and acidic residues; that stretch reads MSDSKDRKGKAPEGQSSEKKDG. The tract at residues 1–45 is disordered; sequence MSDSKDRKGKAPEGQSSEKKDGAVNITPQMAESLLENNPALRNET. Residues 82-85, 215-217, and 223-227 each bind tetradecanoyl-CoA; these read YKFW, LCI, and SKRLT. Residue Leu-492 is the Proton acceptor; via carboxylate of the active site.

Belongs to the NMT family. In terms of assembly, monomer.

Its subcellular location is the cytoplasm. It carries out the reaction N-terminal glycyl-[protein] + tetradecanoyl-CoA = N-tetradecanoylglycyl-[protein] + CoA + H(+). Its function is as follows. Adds a myristoyl group to the N-terminal glycine residue of certain cellular proteins. The protein is Glycylpeptide N-tetradecanoyltransferase (nmt1) of Aspergillus fumigatus (strain ATCC MYA-4609 / CBS 101355 / FGSC A1100 / Af293) (Neosartorya fumigata).